A 154-amino-acid chain; its full sequence is Transcriptional repressor NrdR (154 aa).

Residues 3 to 34 (CPFCGANDTKVIDSRLVAEGEQVRRRRECVAC) fold into a zinc finger. In terms of domain architecture, ATP-cone spans 49 to 139 (PRLIKQDGTR…VYRRFQDLDE (91 aa)).

This sequence belongs to the NrdR family. Zn(2+) is required as a cofactor.

In terms of biological role, negatively regulates transcription of bacterial ribonucleotide reductase nrd genes and operons by binding to NrdR-boxes. The chain is Transcriptional repressor NrdR from Pseudomonas putida (strain W619).